Here is a 226-residue protein sequence, read N- to C-terminus: UPF0111 protein AF_1799 (226 aa).

It belongs to the UPF0111 family.

The sequence is that of UPF0111 protein AF_1799 from Archaeoglobus fulgidus (strain ATCC 49558 / DSM 4304 / JCM 9628 / NBRC 100126 / VC-16).